The sequence spans 313 residues: Beta-ribofuranosylphenol 5'-phosphate synthase (313 aa).

It belongs to the beta-RFA-P synthase family. As to quaternary structure, homodimer.

It carries out the reaction 5-phospho-alpha-D-ribose 1-diphosphate + 4-hydroxybenzoate + H(+) = 4-(beta-D-ribofuranosyl)phenol 5'-phosphate + CO2 + diphosphate. The catalysed reaction is 4-aminobenzoate + 5-phospho-alpha-D-ribose 1-diphosphate + H(+) = 4-(beta-D-ribofuranosyl)aminobenzene 5'-phosphate + CO2 + diphosphate. It functions in the pathway cofactor biosynthesis; 5,6,7,8-tetrahydromethanopterin biosynthesis. Its function is as follows. Catalyzes the condensation of 4-hydroxybenzoate (HB) with 5-phospho-alpha-D-ribose 1-diphosphate (PRPP) to produce beta-ribofuranosylphenol 5'-phosphate (beta-RFH-P). Also catalyzes the condensation of 4-aminobenzoate (pABA) with PRPP to produce beta-ribofuranosylaminobenzene 5'-phosphate (beta-RFA-P). The chain is Beta-ribofuranosylphenol 5'-phosphate synthase from Archaeoglobus fulgidus (strain ATCC 49558 / DSM 4304 / JCM 9628 / NBRC 100126 / VC-16).